A 142-amino-acid chain; its full sequence is Large ribosomal subunit protein uL13 (142 aa).

It belongs to the universal ribosomal protein uL13 family. In terms of assembly, part of the 50S ribosomal subunit.

This protein is one of the early assembly proteins of the 50S ribosomal subunit, although it is not seen to bind rRNA by itself. It is important during the early stages of 50S assembly. The polypeptide is Large ribosomal subunit protein uL13 (Acinetobacter baumannii (strain AB0057)).